We begin with the raw amino-acid sequence, 23 residues long: Acidic phospholipase A2 Cvv-E6c (23 aa).

It depends on Ca(2+) as a cofactor. Contains 7 disulfide bonds. As to expression, expressed by the venom gland.

It localises to the secreted. The catalysed reaction is a 1,2-diacyl-sn-glycero-3-phosphocholine + H2O = a 1-acyl-sn-glycero-3-phosphocholine + a fatty acid + H(+). In terms of biological role, snake venom phospholipase A2 (PLA2) that significantly inhibits ADP-induced platelet aggregation in platelet-rich plasma of human, rabbit and guinea pig. PLA2 catalyzes the calcium-dependent hydrolysis of the 2-acyl groups in 3-sn-phosphoglycerides. The sequence is that of Acidic phospholipase A2 Cvv-E6c from Crotalus viridis viridis (Prairie rattlesnake).